We begin with the raw amino-acid sequence, 341 residues long: Cysteine-rich repeat secretory protein 1 (341 aa).

Residues 1–25 form the signal peptide; it reads MFSLPLHQSKLIFLLSFLLIKTLNA. Gnk2-homologous domains follow at residues 28 to 131 and 136 to 245; these read TYLL…SRKI and DQGP…ATFL. Intrachain disulfides connect Cys85/Cys94, Cys97/Cys122, Cys199/Cys208, and Cys211/Cys236. The segment covering 247–262 has biased composition (pro residues); the sequence is PPPPPPPPPPPPPPPQ. Residues 247-274 form a disordered region; it reads PPPPPPPPPPPPPPPQRLYGENDTPSSD.

This sequence belongs to the cysteine-rich repeat secretory protein family.

The protein localises to the secreted. The chain is Cysteine-rich repeat secretory protein 1 (CRRSP1) from Arabidopsis thaliana (Mouse-ear cress).